Reading from the N-terminus, the 341-residue chain is Phenylalanine--tRNA ligase alpha subunit (341 aa).

Glutamate 254 contributes to the Mg(2+) binding site.

Belongs to the class-II aminoacyl-tRNA synthetase family. Phe-tRNA synthetase alpha subunit type 1 subfamily. As to quaternary structure, tetramer of two alpha and two beta subunits. Mg(2+) is required as a cofactor.

Its subcellular location is the cytoplasm. The catalysed reaction is tRNA(Phe) + L-phenylalanine + ATP = L-phenylalanyl-tRNA(Phe) + AMP + diphosphate + H(+). In Chlorobium limicola (strain DSM 245 / NBRC 103803 / 6330), this protein is Phenylalanine--tRNA ligase alpha subunit.